Reading from the N-terminus, the 342-residue chain is uncharacterized protein (342 aa).

The protein belongs to the cycloisomerase 2 family.

This is an uncharacterized protein from Staphylococcus aureus (strain N315).